We begin with the raw amino-acid sequence, 78 residues long: Translational regulator CsrA (78 aa).

This sequence belongs to the CsrA/RsmA family. In terms of assembly, homodimer; the beta-strands of each monomer intercalate to form a hydrophobic core, while the alpha-helices form wings that extend away from the core.

It localises to the cytoplasm. In terms of biological role, a translational regulator that binds mRNA to regulate translation initiation and/or mRNA stability. Usually binds in the 5'-UTR at or near the Shine-Dalgarno sequence preventing ribosome-binding, thus repressing translation. Its main target seems to be the major flagellin gene, while its function is anatagonized by FliW. This Borrelia hermsii (strain HS1 / DAH) protein is Translational regulator CsrA.